Reading from the N-terminus, the 455-residue chain is UDP-glycosyltransferase 79B2 (455 aa).

UDP-alpha-D-glucose is bound by residues Ser-266, 325-327 (VQQ), 342-350 (HCGFGSMWE), and 364-367 (LGDQ).

It belongs to the UDP-glycosyltransferase family.

This chain is UDP-glycosyltransferase 79B2 (UGT79B2), found in Arabidopsis thaliana (Mouse-ear cress).